The primary structure comprises 273 residues: Dermonecrotic toxin LdSicTox-alphaIB3av (273 aa).

Histidine 5 is a catalytic residue. The Mg(2+) site is built by glutamate 25 and aspartate 27. The active-site Nucleophile is the histidine 41. Cystine bridges form between cysteine 45–cysteine 51 and cysteine 47–cysteine 190. Residue aspartate 85 coordinates Mg(2+).

The protein belongs to the arthropod phospholipase D family. Class II subfamily. Requires Mg(2+) as cofactor. As to expression, expressed by the venom gland.

The protein resides in the secreted. The enzyme catalyses an N-(acyl)-sphingosylphosphocholine = an N-(acyl)-sphingosyl-1,3-cyclic phosphate + choline. The catalysed reaction is an N-(acyl)-sphingosylphosphoethanolamine = an N-(acyl)-sphingosyl-1,3-cyclic phosphate + ethanolamine. It carries out the reaction a 1-acyl-sn-glycero-3-phosphocholine = a 1-acyl-sn-glycero-2,3-cyclic phosphate + choline. It catalyses the reaction a 1-acyl-sn-glycero-3-phosphoethanolamine = a 1-acyl-sn-glycero-2,3-cyclic phosphate + ethanolamine. Its function is as follows. Dermonecrotic toxins cleave the phosphodiester linkage between the phosphate and headgroup of certain phospholipids (sphingolipid and lysolipid substrates), forming an alcohol (often choline) and a cyclic phosphate. This toxin acts on sphingomyelin (SM). It may also act on ceramide phosphoethanolamine (CPE), lysophosphatidylcholine (LPC) and lysophosphatidylethanolamine (LPE), but not on lysophosphatidylserine (LPS), and lysophosphatidylglycerol (LPG). It acts by transphosphatidylation, releasing exclusively cyclic phosphate products as second products. Induces dermonecrosis, hemolysis, increased vascular permeability, edema, inflammatory response, and platelet aggregation. This Loxosceles deserta (Desert recluse spider) protein is Dermonecrotic toxin LdSicTox-alphaIB3av.